We begin with the raw amino-acid sequence, 157 residues long: Protein Smg (157 aa).

This sequence belongs to the Smg family.

This is Protein Smg from Yersinia pseudotuberculosis serotype O:1b (strain IP 31758).